A 322-amino-acid chain; its full sequence is tRNA U34 carboxymethyltransferase (322 aa).

Residues Lys91, Trp105, Lys110, Gly129, 179-180 (LE), Met195, Tyr199, and Arg314 each bind carboxy-S-adenosyl-L-methionine.

It belongs to the class I-like SAM-binding methyltransferase superfamily. CmoB family. As to quaternary structure, homotetramer.

The catalysed reaction is carboxy-S-adenosyl-L-methionine + 5-hydroxyuridine(34) in tRNA = 5-carboxymethoxyuridine(34) in tRNA + S-adenosyl-L-homocysteine + H(+). In terms of biological role, catalyzes carboxymethyl transfer from carboxy-S-adenosyl-L-methionine (Cx-SAM) to 5-hydroxyuridine (ho5U) to form 5-carboxymethoxyuridine (cmo5U) at position 34 in tRNAs. This Pseudomonas aeruginosa (strain ATCC 15692 / DSM 22644 / CIP 104116 / JCM 14847 / LMG 12228 / 1C / PRS 101 / PAO1) protein is tRNA U34 carboxymethyltransferase.